We begin with the raw amino-acid sequence, 428 residues long: L-lysine N6-monooxygenase MbtG (428 aa).

Positions 1–20 are cleaved as a signal peptide; that stretch reads MSTLAILGAGAKAVAVAAKA.

It belongs to the lysine N(6)-hydroxylase/L-ornithine N(5)-oxygenase family. It depends on FAD as a cofactor.

The enzyme catalyses L-lysine + NADPH + O2 = N(6)-hydroxy-L-lysine + NADP(+) + H2O. It participates in siderophore biosynthesis; mycobactin biosynthesis. Its function is as follows. Flavoprotein monooxygenase required for N-hydroxylation of the two acylated lysine residues during mycobactin assembly, thus producing the hydroxamate groups necessary for iron sequestration. Is also able, but less efficiently, to hydroxylate L-lysine (non acylated) in vitro. This Mycolicibacterium paratuberculosis (strain ATCC BAA-968 / K-10) (Mycobacterium paratuberculosis) protein is L-lysine N6-monooxygenase MbtG (mbtG).